A 374-amino-acid chain; its full sequence is Queuine tRNA-ribosyltransferase (374 aa).

The Proton acceptor role is filled by Asp-90. Residues 90–94 (DSGGF), Asp-144, Gln-193, and Gly-220 each bind substrate. The tract at residues 251 to 257 (GVGTPED) is RNA binding. The active-site Nucleophile is the Asp-270. The RNA binding; important for wobble base 34 recognition stretch occupies residues 275–279 (TRNAR). Zn(2+) is bound by residues Cys-308, Cys-310, Cys-313, and His-339.

It belongs to the queuine tRNA-ribosyltransferase family. As to quaternary structure, homodimer. Within each dimer, one monomer is responsible for RNA recognition and catalysis, while the other monomer binds to the replacement base PreQ1. The cofactor is Zn(2+).

The catalysed reaction is 7-aminomethyl-7-carbaguanine + guanosine(34) in tRNA = 7-aminomethyl-7-carbaguanosine(34) in tRNA + guanine. Its pathway is tRNA modification; tRNA-queuosine biosynthesis. In terms of biological role, catalyzes the base-exchange of a guanine (G) residue with the queuine precursor 7-aminomethyl-7-deazaguanine (PreQ1) at position 34 (anticodon wobble position) in tRNAs with GU(N) anticodons (tRNA-Asp, -Asn, -His and -Tyr). Catalysis occurs through a double-displacement mechanism. The nucleophile active site attacks the C1' of nucleotide 34 to detach the guanine base from the RNA, forming a covalent enzyme-RNA intermediate. The proton acceptor active site deprotonates the incoming PreQ1, allowing a nucleophilic attack on the C1' of the ribose to form the product. After dissociation, two additional enzymatic reactions on the tRNA convert PreQ1 to queuine (Q), resulting in the hypermodified nucleoside queuosine (7-(((4,5-cis-dihydroxy-2-cyclopenten-1-yl)amino)methyl)-7-deazaguanosine). The chain is Queuine tRNA-ribosyltransferase from Campylobacter fetus subsp. fetus (strain 82-40).